The chain runs to 381 residues: Creatine kinase M-type (381 aa).

The Phosphagen kinase N-terminal domain maps to 11–98 (KLNYKPEEEY…FDPIIQDRHG (88 aa)). One can recognise a Phosphagen kinase C-terminal domain in the interval 125-367 (YVLSSRVRTG…KLMVEMEKKL (243 aa)). 128-132 (SSRVR) is a binding site for ATP. Serine 164 is modified (phosphoserine). At threonine 166 the chain carries Phosphothreonine. Residue serine 178 is modified to Phosphoserine. Threonine 180 carries the post-translational modification Phosphothreonine. Histidine 191 is a binding site for ATP. A Phosphoserine modification is found at serine 199. Arginine 236 and arginine 292 together coordinate ATP. Phosphothreonine is present on residues threonine 313 and threonine 322. ATP-binding positions include 320–325 (RGTGGV) and aspartate 335. Phosphoserine is present on serine 372.

This sequence belongs to the ATP:guanido phosphotransferase family. In terms of assembly, dimer of identical or non-identical chains, which can be either B (brain type) or M (muscle type). With MM being the major form in skeletal muscle and myocardium, MB existing in myocardium, and BB existing in many tissues, especially brain.

It localises to the cytoplasm. The catalysed reaction is creatine + ATP = N-phosphocreatine + ADP + H(+). In terms of biological role, reversibly catalyzes the transfer of phosphate between ATP and various phosphogens (e.g. creatine phosphate). Creatine kinase isoenzymes play a central role in energy transduction in tissues with large, fluctuating energy demands, such as skeletal muscle, heart, brain and spermatozoa. The protein is Creatine kinase M-type (CKM) of Canis lupus familiaris (Dog).